The primary structure comprises 277 residues: 3-methyl-2-oxobutanoate hydroxymethyltransferase (277 aa).

2 residues coordinate Mg(2+): D58 and D97. Residues D58–S59, D97, and K127 each bind 3-methyl-2-oxobutanoate. A Mg(2+)-binding site is contributed by E129. Residue E195 is the Proton acceptor of the active site.

This sequence belongs to the PanB family. In terms of assembly, homodecamer; pentamer of dimers. Mg(2+) serves as cofactor.

It localises to the cytoplasm. The enzyme catalyses 3-methyl-2-oxobutanoate + (6R)-5,10-methylene-5,6,7,8-tetrahydrofolate + H2O = 2-dehydropantoate + (6S)-5,6,7,8-tetrahydrofolate. It functions in the pathway cofactor biosynthesis; (R)-pantothenate biosynthesis; (R)-pantoate from 3-methyl-2-oxobutanoate: step 1/2. Catalyzes the reversible reaction in which hydroxymethyl group from 5,10-methylenetetrahydrofolate is transferred onto alpha-ketoisovalerate to form ketopantoate. The chain is 3-methyl-2-oxobutanoate hydroxymethyltransferase from Leifsonia xyli subsp. xyli (strain CTCB07).